Consider the following 204-residue polypeptide: Protein G1-like5 (204 aa).

Disordered regions lie at residues 1–45 (MEFV…ESQK) and 157–204 (RARG…GAAA). The span at 26-39 (TGATSASAAGASPS) shows a compositional bias: low complexity. The ALOG domain occupies 40–167 (RYESQKRRDW…ARGVSYEKKK (128 aa)). Positions 165–169 (KKKRK) match the Nuclear localization signal motif.

It belongs to the plant homeotic and developmental regulators ALOG protein family.

It is found in the nucleus. Its function is as follows. Probable transcription regulator that acts as a developmental regulator by promoting cell growth in response to light. This is Protein G1-like5 (G1L5) from Oryza sativa subsp. japonica (Rice).